The following is a 131-amino-acid chain: Profilin (131 aa).

The protein belongs to the profilin family. As to quaternary structure, occurs in many kinds of cells as a complex with monomeric actin in a 1:1 ratio.

The protein resides in the cytoplasm. The protein localises to the cytoskeleton. Its function is as follows. Binds to actin and affects the structure of the cytoskeleton. At high concentrations, profilin prevents the polymerization of actin, whereas it enhances it at low concentrations. By binding to PIP2, it inhibits the formation of IP3 and DG. The chain is Profilin from Fragaria ananassa (Strawberry).